The sequence spans 135 residues: Small ribosomal subunit protein uS9 (135 aa).

A disordered region spans residues 96-135 (SADNRKPLKTEGHLSRDPRAKERRKYGLKKARKAPQFSKR). A compositionally biased stretch (basic and acidic residues) spans 97–115 (ADNRKPLKTEGHLSRDPRA). A compositionally biased stretch (basic residues) spans 116-135 (KERRKYGLKKARKAPQFSKR).

It belongs to the universal ribosomal protein uS9 family.

The sequence is that of Small ribosomal subunit protein uS9 from Prochlorococcus marinus (strain MIT 9313).